A 1210-amino-acid chain; its full sequence is Epidermal growth factor receptor (1210 aa).

The first 24 residues, 1 to 24, serve as a signal peptide directing secretion; sequence MRPSGTARTTLLVLLTALCAAGGA. Residues 25–647 lie on the Extracellular side of the membrane; sequence LEEKKVCQGT…VWPSGPKIPS (623 aa). A disulfide bond links Cys-31 and Cys-58. An Approximate repeat occupies 75-300; that stretch reads DLSFLKTIQE…CVKKCPRNYV (226 aa). Residues Asn-128, Asn-175, and Asn-196 are each glycosylated (N-linked (GlcNAc...) asparagine). 13 cysteine pairs are disulfide-bonded: Cys-157–Cys-187, Cys-190–Cys-199, Cys-194–Cys-207, Cys-215–Cys-223, Cys-219–Cys-231, Cys-232–Cys-240, Cys-236–Cys-248, Cys-251–Cys-260, Cys-264–Cys-291, Cys-295–Cys-307, Cys-311–Cys-326, Cys-329–Cys-333, and Cys-337–Cys-362. Ser-229 is subject to Phosphoserine. Asn-352, Asn-413, and Asn-444 each carry an N-linked (GlcNAc...) asparagine glycan. One copy of the Approximate repeat lies at 390 to 600; that stretch reads RELEILKTVK…CVKTCPAGIM (211 aa). 11 disulfide bridges follow: Cys-470-Cys-499, Cys-506-Cys-515, Cys-510-Cys-523, Cys-526-Cys-535, Cys-539-Cys-555, Cys-558-Cys-571, Cys-562-Cys-579, Cys-582-Cys-591, Cys-595-Cys-617, Cys-620-Cys-628, and Cys-624-Cys-636. The N-linked (GlcNAc...) asparagine glycan is linked to Asn-528. An N-linked (GlcNAc...) asparagine glycan is attached at Asn-568. Residues Asn-603 and Asn-623 are each glycosylated (N-linked (GlcNAc...) asparagine). Residues 648–670 traverse the membrane as a helical segment; that stretch reads IATGIVGGLLFIVVVALGIGLFM. At 671-1210 the chain is on the cytoplasmic side; that stretch reads RRRHIVRKRT…APPSSEFIGA (540 aa). At Thr-680 the chain carries Phosphothreonine; by PKC and PKD/PRKD1. Residues 690–706 are important for dimerization, phosphorylation and activation; it reads LVEPLTPSGEAPNQAHL. Position 695 is a phosphothreonine; by PKD/PRKD1 (Thr-695). Ser-697 bears the Phosphoserine mark. In terms of domain architecture, Protein kinase spans 714–981; the sequence is FKKIKVLGSG…KMARDPQRYL (268 aa). Residue Lys-718 forms a Glycyl lysine isopeptide (Lys-Gly) (interchain with G-Cter in ubiquitin) linkage. ATP is bound at residue 720-728; the sequence is LGSGAFGTV. Residue Lys-739 forms a Glycyl lysine isopeptide (Lys-Gly) (interchain with G-Cter in ubiquitin) linkage. An ATP-binding site is contributed by Lys-747. Lys-747 bears the N6-(2-hydroxyisobutyryl)lysine mark. Residues Lys-756 and Lys-759 each participate in a glycyl lysine isopeptide (Lys-Gly) (interchain with G-Cter in ubiquitin) cross-link. ATP is bound at residue 792–793; sequence TQ. Asp-839 serves as the catalytic Proton acceptor. An ATP-binding site is contributed by Asp-857. Lys-869 is covalently cross-linked (Glycyl lysine isopeptide (Lys-Gly) (interchain with G-Cter in ubiquitin)). A Phosphotyrosine modification is found at Tyr-871. Residues Lys-931, Lys-962, and Lys-972 each participate in a glycyl lysine isopeptide (Lys-Gly) (interchain with G-Cter in ubiquitin) cross-link. Ser-993 and Ser-997 each carry phosphoserine. Residues Tyr-1000 and Tyr-1018 each carry the phosphotyrosine; by autocatalysis modification. A phosphoserine mark is found at Ser-1028 and Ser-1041. Position 1043 is a phosphothreonine (Thr-1043). A Phosphoserine modification is found at Ser-1044. Cys-1051 carries the S-palmitoyl cysteine lipid modification. Tyr-1069 carries the post-translational modification Phosphotyrosine. Phosphoserine is present on residues Ser-1070 and Ser-1071. Phosphotyrosine; by autocatalysis occurs at positions 1092 and 1110. The segment at 1113–1137 is disordered; sequence QPLHPAPGRDLHYQNPHSNAVGNPE. Residues 1127 to 1137 are compositionally biased toward polar residues; sequence NPHSNAVGNPE. A lipid anchor (S-palmitoyl cysteine) is attached at Cys-1146. Ser-1166 is modified (phosphoserine). Tyr-1172 bears the Phosphotyrosine; by autocatalysis mark. Tyr-1197 bears the Phosphotyrosine mark. Residue Arg-1199 is modified to Omega-N-methylarginine.

Belongs to the protein kinase superfamily. Tyr protein kinase family. EGF receptor subfamily. In terms of assembly, binding of the ligand triggers homo- and/or heterodimerization of the receptor triggering its autophosphorylation. Heterodimer with ERBB2. Forms a complex with CCDC88A/GIV (via SH2-like region) and GNAI3 which leads to enhanced EGFR signaling and triggering of cell migration; binding of CCDC88A requires autophosphorylation of the EGFR C-terminal region, and ligand stimulation is required for recruitment of GNAI3 to the complex. Interacts with ERRFI1; inhibits dimerization of the kinase domain and autophosphorylation. Part of a complex with ERBB2 and either PIK3C2A or PIK3C2B. Interacts with GRB2; an adapter protein coupling the receptor to downstream signaling pathways. Interacts with GAB2; involved in signaling downstream of EGFR. Interacts with STAT3; mediates EGFR downstream signaling in cell proliferation. Interacts with RIPK1; involved in NF-kappa-B activation. Interacts (autophosphorylated) with CBL, CBLB and CBLC; involved in EGFR ubiquitination and regulation; interaction with CBL is reduced in the presence of tensin TNS4. Interacts with SOCS5; regulates EGFR degradation through ELOC- and ELOB-mediated ubiquitination and proteasomal degradation. Interacts with PRMT5; methylates EGFR and enhances interaction with PTPN6. Interacts (phosphorylated) with PTPN6; inhibits EGFR-dependent activation of MAPK/ERK. Interacts with COPG1; essential for regulation of EGF-dependent nuclear transport of EGFR by retrograde trafficking from the Golgi to the ER. Interacts with TNK2; this interaction is dependent on EGF stimulation and kinase activity of EGFR. Interacts with PCNA; positively regulates PCNA. Interacts with PELP1. Interacts with MUC1. Interacts with AP2M1. Interacts with FER. Interacts (via SH2 domains) with GRB2, NCK1 and NCK2. Interacts with EPS8; mediates EPS8 phosphorylation. Interacts with ATXN2. Interacts with GAREM1. Interacts (ubiquitinated) with ANKRD13A/B/D; the interaction is direct and may regulate EGFR internalization after EGF stimulation. Interacts with GPER1; the interaction occurs in an estrogen-dependent manner. Interacts (via C-terminal cytoplasmic kinase domain) with ZPR1 (via zinc fingers). Interacts with RNF115 and RNF126. Interacts with GPRC5A (via its transmembrane domain). Interacts with FAM83B; positively regulates EGFR inducing its autophosphorylation in absence of stimulation by EGF. Interacts with LAPTM4B; positively correlates with EGFR activation. Interacts with STX19. Interacts with CD44. Interacts with PGRMC1; the interaction requires PGRMC1 homodimerization. Interacts with PIKFYVE. Interacts with NEU3. Interacts with TRAF4. Interacts with the ant venom OMEGA-myrmeciitoxin(02)-Mg1a. Interacts with CD82; this interaction facilitates ligand-induced endocytosis of the receptor and its subsequent desensitization. In terms of processing, monoubiquitinated and polyubiquitinated upon EGF stimulation; which does not affect tyrosine kinase activity or signaling capacity but may play a role in lysosomal targeting. Polyubiquitin linkage is mainly through 'Lys-63', but linkage through 'Lys-48', 'Lys-11' and 'Lys-29' also occurs. Deubiquitinated by OTUD7B, preventing degradation. Ubiquitinated by RNF115 and RNF126. Ubiquitinated by ZNRF1 or CBL at different lysines in response to EGF stimulation; leading to recruitment of the ESCRT machinery and subsequent degradation in the lysosomes. Deubiquitinated by UCHL1 leading to the inhibition of its degradation. Post-translationally, phosphorylated on Tyr residues in response to EGF. Phosphorylation at Ser-697 is partial and occurs only if Thr-695 is phosphorylated. Phosphorylation at Thr-680 and Thr-695 by PRKD1 inhibits EGF-induced MAPK8/JNK1 activation. Dephosphorylation by PTPRJ prevents endocytosis and stabilizes the receptor at the plasma membrane. Autophosphorylation at Tyr-1199 is stimulated by methylation at Arg-1199 and enhances interaction with PTPN6. Autophosphorylation at Tyr-1092 and/or Tyr-1110 recruits STAT3. Dephosphorylated by PTPN1 and PTPN2. Palmitoylated on Cys residues by ZDHHC20. Palmitoylation inhibits internalization after ligand binding, and increases the persistence of tyrosine-phosphorylated EGFR at the cell membrane. Palmitoylation increases the amplitude and duration of EGFR signaling. In terms of processing, methylated. Methylation at Arg-1199 by PRMT5 stimulates phosphorylation at Tyr-1197.

The protein resides in the cell membrane. It localises to the endoplasmic reticulum membrane. Its subcellular location is the golgi apparatus membrane. The protein localises to the nucleus membrane. It is found in the endosome. The protein resides in the endosome membrane. It localises to the nucleus. The catalysed reaction is L-tyrosyl-[protein] + ATP = O-phospho-L-tyrosyl-[protein] + ADP + H(+). Endocytosis and inhibition of the activated EGFR by phosphatases like PTPRJ and PTPRK constitute immediate regulatory mechanisms. Upon EGF-binding phosphorylates EPS15 that regulates EGFR endocytosis and activity. Moreover, inducible feedback inhibitors including LRIG1, SOCS4, SOCS5 and ERRFI1 constitute alternative regulatory mechanisms for the EGFR signaling. Receptor tyrosine kinase binding ligands of the EGF family and activating several signaling cascades to convert extracellular cues into appropriate cellular responses. Known ligands include EGF, TGFA/TGF-alpha, AREG, epigen/EPGN, BTC/betacellulin, epiregulin/EREG and HBEGF/heparin-binding EGF. Ligand binding triggers receptor homo- and/or heterodimerization and autophosphorylation on key cytoplasmic residues. The phosphorylated receptor recruits adapter proteins like GRB2 which in turn activates complex downstream signaling cascades. Activates at least 4 major downstream signaling cascades including the RAS-RAF-MEK-ERK, PI3 kinase-AKT, PLCgamma-PKC and STATs modules. May also activate the NF-kappa-B signaling cascade. Also directly phosphorylates other proteins like RGS16, activating its GTPase activity and probably coupling the EGF receptor signaling to the G protein-coupled receptor signaling. Also phosphorylates MUC1 and increases its interaction with SRC and CTNNB1/beta-catenin. Positively regulates cell migration via interaction with CCDC88A/GIV which retains EGFR at the cell membrane following ligand stimulation, promoting EGFR signaling which triggers cell migration. Plays a role in enhancing learning and memory performance. Plays a role in mammalian pain signaling (long-lasting hypersensitivity). The polypeptide is Epidermal growth factor receptor (Mus musculus (Mouse)).